Reading from the N-terminus, the 268-residue chain is Proenkephalin-A (268 aa).

Residues 1–24 form the signal peptide; it reads MARFLRLCTWLLALGSCLLATVQA. 3 cysteine pairs are disulfide-bonded: Cys26–Cys48, Cys30–Cys52, and Cys33–Cys65. The segment at 163–184 is disordered; the sequence is TGDNRAKDSHQQESTNNDEDMS. Propeptides lie at residues 197–208 and 218–228; these read SPQLEDEAKELQ and VGRPEWWMDYQ. Position 252 is a phosphoserine (Ser252).

It belongs to the opioid neuropeptide precursor family. Post-translationally, proenkephalin-A is cleaved by CTSL to generate Met-enkephalin. Processed and degraded by ACE. In terms of processing, probably cleaved by ACE. Post-translationally, processed by ACE to generate Met-enkephalin in the nucleus accumbens of the brain. The N-terminal domain contains 6 conserved cysteines thought to be involved in disulfide bonding and/or processing. In terms of tissue distribution, spermatogenic and somatic cells.

Its subcellular location is the cytoplasmic vesicle. The protein localises to the secretory vesicle. It localises to the chromaffin granule lumen. It is found in the secreted. Its function is as follows. Neuropeptide that competes with and mimic the effects of opiate drugs. They play a role in a number of physiologic functions, including pain perception and responses to stress. In terms of biological role, met-enkephalin-Arg-Phe neuropeptide acts as a strong ligand of Mu-type opioid receptor OPRM1. Met-enkephalin-Arg-Phe-binding to OPRM1 in the nucleus accumbens of the brain increases activation of OPRM1, leading to long-term synaptic depression of glutamate release. Increases glutamate release in the striatum and decreases GABA concentration in the striatum. Functionally, increases glutamate release in the striatum. The sequence is that of Proenkephalin-A (Penk) from Mus musculus (Mouse).